The following is a 133-amino-acid chain: Fluoride-specific ion channel FluC (133 aa).

4 consecutive transmembrane segments (helical) span residues 12–32, 41–61, 76–96, and 104–124; these read LAMTGGALGSGLRFAIGASLI, WGTLTVNLLGSFVAGVLLVWL, IVGVIGGLTTFSSLMMECLVF, and MIGIYLAVTLLAGLALVVAGA. Gly81 and Thr84 together coordinate Na(+).

This sequence belongs to the fluoride channel Fluc/FEX (TC 1.A.43) family.

The protein localises to the cell inner membrane. It catalyses the reaction fluoride(in) = fluoride(out). Na(+) is not transported, but it plays an essential structural role and its presence is essential for fluoride channel function. In terms of biological role, fluoride-specific ion channel. Important for reducing fluoride concentration in the cell, thus reducing its toxicity. The polypeptide is Fluoride-specific ion channel FluC (Xanthomonas euvesicatoria pv. vesicatoria (strain 85-10) (Xanthomonas campestris pv. vesicatoria)).